Reading from the N-terminus, the 855-residue chain is DNA mismatch repair protein MutS (855 aa).

Residue 621–628 (GPNMGGKS) participates in ATP binding.

It belongs to the DNA mismatch repair MutS family.

Functionally, this protein is involved in the repair of mismatches in DNA. It is possible that it carries out the mismatch recognition step. This protein has a weak ATPase activity. This Francisella tularensis subsp. holarctica (strain OSU18) protein is DNA mismatch repair protein MutS.